A 565-amino-acid polypeptide reads, in one-letter code: CTP synthase (565 aa).

The segment at 1–272 is amidoligase domain; that stretch reads MARPKNVKHI…DLRVMKKLGL (272 aa). Ser-18 provides a ligand contact to CTP. Ser-18 lines the UTP pocket. 19–24 contributes to the ATP binding site; sequence SLGKGI. Tyr-59 contacts L-glutamine. Asp-76 is a binding site for ATP. Positions 76 and 146 each coordinate Mg(2+). Residues 153 to 155, 193 to 198, and Lys-229 each bind CTP; these read DIE and KTKPTQ. Residues 193–198 and Lys-229 each bind UTP; that span reads KTKPTQ. The 245-residue stretch at 299–543 folds into the Glutamine amidotransferase type-1 domain; that stretch reads TIGVCGKYTE…VQAAKEFAMG (245 aa). L-glutamine is bound at residue Gly-363. Cys-390 (nucleophile; for glutamine hydrolysis) is an active-site residue. Residues 391–394, Glu-414, and Arg-471 each bind L-glutamine; that span reads LGMQ. Residues His-516 and Glu-518 contribute to the active site.

This sequence belongs to the CTP synthase family. In terms of assembly, homotetramer.

It catalyses the reaction UTP + L-glutamine + ATP + H2O = CTP + L-glutamate + ADP + phosphate + 2 H(+). The enzyme catalyses L-glutamine + H2O = L-glutamate + NH4(+). It carries out the reaction UTP + NH4(+) + ATP = CTP + ADP + phosphate + 2 H(+). Its pathway is pyrimidine metabolism; CTP biosynthesis via de novo pathway; CTP from UDP: step 2/2. With respect to regulation, allosterically activated by GTP, when glutamine is the substrate; GTP has no effect on the reaction when ammonia is the substrate. The allosteric effector GTP functions by stabilizing the protein conformation that binds the tetrahedral intermediate(s) formed during glutamine hydrolysis. Inhibited by the product CTP, via allosteric rather than competitive inhibition. Catalyzes the ATP-dependent amination of UTP to CTP with either L-glutamine or ammonia as the source of nitrogen. Regulates intracellular CTP levels through interactions with the four ribonucleotide triphosphates. In Chlorobaculum parvum (strain DSM 263 / NCIMB 8327) (Chlorobium vibrioforme subsp. thiosulfatophilum), this protein is CTP synthase.